A 201-amino-acid polypeptide reads, in one-letter code: Molybdenum cofactor guanylyltransferase (201 aa).

Residues 14 to 16, K31, and D104 contribute to the GTP site; that span reads LAG. Residue D104 participates in Mg(2+) binding.

It belongs to the MobA family. As to quaternary structure, monomer. Mg(2+) serves as cofactor.

It localises to the cytoplasm. It catalyses the reaction Mo-molybdopterin + GTP + H(+) = Mo-molybdopterin guanine dinucleotide + diphosphate. In terms of biological role, transfers a GMP moiety from GTP to Mo-molybdopterin (Mo-MPT) cofactor (Moco or molybdenum cofactor) to form Mo-molybdopterin guanine dinucleotide (Mo-MGD) cofactor. The polypeptide is Molybdenum cofactor guanylyltransferase (Helicobacter pylori (strain P12)).